A 181-amino-acid chain; its full sequence is ATP synthase subunit delta (181 aa).

It belongs to the ATPase delta chain family. In terms of assembly, F-type ATPases have 2 components, F(1) - the catalytic core - and F(0) - the membrane proton channel. F(1) has five subunits: alpha(3), beta(3), gamma(1), delta(1), epsilon(1). F(0) has three main subunits: a(1), b(2) and c(10-14). The alpha and beta chains form an alternating ring which encloses part of the gamma chain. F(1) is attached to F(0) by a central stalk formed by the gamma and epsilon chains, while a peripheral stalk is formed by the delta and b chains.

The protein localises to the cell inner membrane. In terms of biological role, f(1)F(0) ATP synthase produces ATP from ADP in the presence of a proton or sodium gradient. F-type ATPases consist of two structural domains, F(1) containing the extramembraneous catalytic core and F(0) containing the membrane proton channel, linked together by a central stalk and a peripheral stalk. During catalysis, ATP synthesis in the catalytic domain of F(1) is coupled via a rotary mechanism of the central stalk subunits to proton translocation. This protein is part of the stalk that links CF(0) to CF(1). It either transmits conformational changes from CF(0) to CF(1) or is implicated in proton conduction. This Cupriavidus taiwanensis (strain DSM 17343 / BCRC 17206 / CCUG 44338 / CIP 107171 / LMG 19424 / R1) (Ralstonia taiwanensis (strain LMG 19424)) protein is ATP synthase subunit delta.